A 555-amino-acid chain; its full sequence is Protection of telomeres protein 1 (555 aa).

Belongs to the telombin family. As to quaternary structure, self-associates. Interacts with ccq1, poz1 and tpz1.

Its subcellular location is the nucleus. The protein localises to the chromosome. It is found in the telomere. Its function is as follows. Single-stranded telomeric DNA-binding protein that is required to protect the 3'-end telomeric overhang. It binds the consensus sequence 5'-GGTTAC-3'. Regulates telomerase and telomere length. This Schizosaccharomyces pombe (strain 972 / ATCC 24843) (Fission yeast) protein is Protection of telomeres protein 1 (pot1).